Here is a 302-residue protein sequence, read N- to C-terminus: Protein FLOURY 1 (302 aa).

The next 2 membrane-spanning stretches (helical) occupy residues 27-47 (SAGAGALYFLIGSGLGVVAVL) and 82-102 (LAGSVGAQRLLLATSLLFLAV). Residues 160–195 (SSKPVSRSLAAEFDQEADGEEEDNAGETSDPDDGSV) form a disordered region. Acidic residues predominate over residues 172-192 (FDQEADGEEEDNAGETSDPDD). A GTD-binding domain is found at 193–299 (GSVQYLRRRL…ALSETSEDDR (107 aa)). The stretch at 199–254 (RRRLKEEMLLKEVALEELEKERHAAASAADEAMSKIACLRSEKALVEREARQFQEM) forms a coiled coil. The segment at 283–302 (PEAITDRALSETSEDDRDKK) is disordered.

Interacts (via C-terminus) with both 22 kDa and 19 kDa alpha-zeins. Interacts (via C-terminus) with OP10 (via N-terminus). As to expression, expressed in endosperm. Not detected in embryo, leaves and roots.

It localises to the endoplasmic reticulum membrane. Its function is as follows. Involved in protein body development and 22 kDa alpha-zein localization. The chain is Protein FLOURY 1 from Zea mays (Maize).